A 1029-amino-acid polypeptide reads, in one-letter code: Beta-galactosidase (1029 aa).

Asn-108 and Asp-207 together coordinate substrate. Asp-207 serves as a coordination point for Na(+). Residues Glu-422, His-424, and Glu-467 each contribute to the Mg(2+) site. Substrate-binding positions include Glu-467 and 543 to 546; that span reads EYAH. Glu-467 serves as the catalytic Proton donor. Catalysis depends on Glu-543, which acts as the Nucleophile. Asn-603 is a Mg(2+) binding site. Positions 607 and 610 each coordinate Na(+). Substrate is bound by residues Asn-610 and Trp-1005.

The protein belongs to the glycosyl hydrolase 2 family. As to quaternary structure, homotetramer. Mg(2+) serves as cofactor. The cofactor is Na(+).

The catalysed reaction is Hydrolysis of terminal non-reducing beta-D-galactose residues in beta-D-galactosides.. In Escherichia coli, this protein is Beta-galactosidase.